A 1286-amino-acid polypeptide reads, in one-letter code: Galactose/N-acetyl-D-galactosamine lectin heavy subunit 2 (1286 aa).

The first 15 residues, 1-15 (MKLLLLNILLLCCLA), serve as a signal peptide directing secretion. Over 16-1227 (DKLNEFSADI…NNVGAIAAAT (1212 aa)) the chain is Extracellular. N200, N331, N384, N462, N652, N883, N1197, and N1207 each carry an N-linked (GlcNAc...) asparagine glycan. A helical transmembrane segment spans residues 1228 to 1248 (TVAVVVVAVVVALIVVSIGLF). The Cytoplasmic segment spans residues 1249–1286 (KTYQLVSSAMKNAITTTNENAEYVGADNEATNAATYNG).

As to quaternary structure, heterodimer composed of a 170 kDa heavy subunit (hgl) and a 31/35 kDa light subunit (lgl); disulfide-linked. Post-translationally, N-glycosylated.

It localises to the cell membrane. Functionally, lectin which binds galactose and N-acetyl-D-galactosamine of host glycoproteins and thus mediates adhesion to host cells. Mediates adherence to host colonic mucins, an essential step for pathogenic tissue invasion. In Entamoeba histolytica (strain ATCC 30459 / HM-1:IMSS / ABRM), this protein is Galactose/N-acetyl-D-galactosamine lectin heavy subunit 2.